Here is a 203-residue protein sequence, read N- to C-terminus: Formate hydrogenlyase subunit 2 (203 aa).

4Fe-4S ferredoxin-type domains are found at residues 2–32, 42–72, 73–102, and 137–169; these read NRFV…HGLQ, NEKE…TRVD, GAVQ…FSGS, and RAIA…LVDN. Cysteine 12, cysteine 15, cysteine 18, cysteine 22, cysteine 51, cysteine 54, cysteine 59, cysteine 63, cysteine 82, cysteine 85, cysteine 88, cysteine 92, cysteine 143, cysteine 146, cysteine 155, and cysteine 159 together coordinate [4Fe-4S] cluster.

FHL comprises of a formate dehydrogenase, unidentified electron carriers and a hydrogenase (isoenzyme 3). In this non-energy conserving pathway, molecular hydrogen and carbodioxide are released from formate. The cofactor is [4Fe-4S] cluster.

Its function is as follows. Probable electron transfer protein for hydrogenase 3. The sequence is that of Formate hydrogenlyase subunit 2 (hycB) from Escherichia coli (strain K12).